A 196-amino-acid polypeptide reads, in one-letter code: Pyridoxal 5'-phosphate synthase subunit PdxT (196 aa).

56-58 (GES) provides a ligand contact to L-glutamine. Cysteine 85 serves as the catalytic Nucleophile. L-glutamine-binding positions include arginine 113 and 141-142 (IR). Catalysis depends on charge relay system residues histidine 177 and glutamate 179.

Belongs to the glutaminase PdxT/SNO family. In terms of assembly, in the presence of PdxS, forms a dodecamer of heterodimers. Only shows activity in the heterodimer.

It carries out the reaction aldehydo-D-ribose 5-phosphate + D-glyceraldehyde 3-phosphate + L-glutamine = pyridoxal 5'-phosphate + L-glutamate + phosphate + 3 H2O + H(+). The enzyme catalyses L-glutamine + H2O = L-glutamate + NH4(+). Its pathway is cofactor biosynthesis; pyridoxal 5'-phosphate biosynthesis. Functionally, catalyzes the hydrolysis of glutamine to glutamate and ammonia as part of the biosynthesis of pyridoxal 5'-phosphate. The resulting ammonia molecule is channeled to the active site of PdxS. This is Pyridoxal 5'-phosphate synthase subunit PdxT from Methanospirillum hungatei JF-1 (strain ATCC 27890 / DSM 864 / NBRC 100397 / JF-1).